Here is an 897-residue protein sequence, read N- to C-terminus: Pre-mRNA-splicing factor CWC22 homolog (897 aa).

A compositionally biased stretch (polar residues) spans 1 to 10; it reads MSSSRSQSPE. Residues 1–155 are disordered; sequence MSSSRSQSPE…EKKKKEPLDI (155 aa). 3 stretches are compositionally biased toward basic and acidic residues: residues 36 to 54, 93 to 107, and 131 to 155; these read SSEK…REVS, RSKE…EKSP, and RSSE…PLDI. One can recognise an MIF4G domain in the interval 194–382; the sequence is KKKIHGLVNR…ETAMQIRKDK (189 aa). The interval 444-472 is disordered; it reads NADISDEDGGDELDDEEEGSDVEEAPKKT. Positions 447–466 are enriched in acidic residues; the sequence is ISDEDGGDELDDEEEGSDVE. Residues 485-601 form the MI domain; it reads AFRREVYLTM…DWKILADMKM (117 aa). 2 stretches are compositionally biased toward low complexity: residues 689–710 and 720–730; these read LDQL…SDSS and DSSSDSSSSSE. The segment at 689 to 897 is disordered; that stretch reads LDQLKAESSS…VESDDRRRRR (209 aa). Positions 743-897 are enriched in basic and acidic residues; sequence NSEESSKKKE…VESDDRRRRR (155 aa).

This sequence belongs to the CWC22 family. Expressed in germ cells, oocytes, and sperm cells.

The protein resides in the nucleus. It is found in the nucleus speckle. Its function is as follows. Required for pre-mRNA splicing and for exon-junction complex (EJC) assembly. Hinders EIF4A3 from non-specifically binding RNA and escorts it to the splicing machinery to promote EJC assembly on mature mRNAs. Through its role in EJC assembly, required for nonsense-mediated mRNA decay. Plays a role in the nuclear retention of unspliced mRNAs. Plays a role in sex determination. Required for early embryogenesis and tissue differentiation. This is Pre-mRNA-splicing factor CWC22 homolog from Caenorhabditis elegans.